The sequence spans 248 residues: Triosephosphate isomerase (248 aa).

Residues Asn10 and Lys12 each coordinate D-glyceraldehyde 3-phosphate. Residue His95 is the Electrophile of the active site. Glu165 functions as the Proton acceptor in the catalytic mechanism. Residues Gly171, Leu230, and 232–233 each bind D-glyceraldehyde 3-phosphate; that span reads GN.

Belongs to the triosephosphate isomerase family. In terms of assembly, homodimer.

The enzyme catalyses D-glyceraldehyde 3-phosphate = dihydroxyacetone phosphate. The protein operates within carbohydrate biosynthesis; gluconeogenesis. It functions in the pathway carbohydrate degradation; glycolysis; D-glyceraldehyde 3-phosphate from glycerone phosphate: step 1/1. Its function is as follows. Catalyzes the interconversion of glyceraldehyde 3-phosphate and dihydroxyacetone phosphate in the glycolytic and gluconeogenic pathways. The polypeptide is Triosephosphate isomerase (Plasmodium falciparum (isolate 3D7)).